A 408-amino-acid polypeptide reads, in one-letter code: Myb/SANT-like DNA-binding domain-containing protein 4 (408 aa).

In terms of domain architecture, Myb-like spans 4-77 (LKRKRKSNFS…EVKRRYLDWR (74 aa)). A coiled-coil region spans residues 236–367 (HLLVTLEKQK…IEKERLQDAL (132 aa)).

The polypeptide is Myb/SANT-like DNA-binding domain-containing protein 4 (msantd4) (Xenopus tropicalis (Western clawed frog)).